Reading from the N-terminus, the 384-residue chain is Galactokinase (384 aa).

A substrate-binding site is contributed by glutamate 35 to aspartate 38. ATP is bound by residues serine 69 and glycine 125–serine 131. Residues serine 131 and glutamate 163 each coordinate Mg(2+). The Proton acceptor role is filled by aspartate 175. Residue tyrosine 224 coordinates substrate.

It belongs to the GHMP kinase family. GalK subfamily.

Its subcellular location is the cytoplasm. It carries out the reaction alpha-D-galactose + ATP = alpha-D-galactose 1-phosphate + ADP + H(+). It functions in the pathway carbohydrate metabolism; galactose metabolism. In terms of biological role, catalyzes the transfer of the gamma-phosphate of ATP to D-galactose to form alpha-D-galactose-1-phosphate (Gal-1-P). The protein is Galactokinase of Aliivibrio fischeri (strain MJ11) (Vibrio fischeri).